A 542-amino-acid chain; its full sequence is Organic anion transporter 3 (542 aa).

Residues 1–20 (MTFSEILDRVGSMGRFQFLH) lie on the Cytoplasmic side of the membrane. Position 4 is a phosphoserine (Ser4). Residues 21–41 (VAILGLPILNMANHNLLQIFT) form a helical membrane-spanning segment. The Extracellular portion of the chain corresponds to 42-123 (AATPVHHCRP…LVCNSNKLKE (82 aa)). Asn86 carries an N-linked (GlcNAc...) asparagine glycan. The helical transmembrane segment at 124 to 144 (MAQSIFMAGILIGGLVLGDLS) threads the bilayer. Residues 145–154 (DRFGRRPILT) are Cytoplasmic-facing. Residues 155–175 (CSYLLLAASGSGAAFSPTFPI) traverse the membrane as a helical segment. A topological domain (extracellular) is located at residue Tyr176. A helical transmembrane segment spans residues 177 to 197 (MVFRFLCGFGISGITLSTVIL). Over 198–212 (NVEWVPTRMRAIMST) the chain is Cytoplasmic. A helical membrane pass occupies residues 213 to 233 (ALGYCYTFGQFILPGLAYAIP). Topologically, residues 234–236 (QWR) are extracellular. The helical transmembrane segment at 237–257 (WLQLTVSIPFFIFFLSSWWTP) threads the bilayer. Residues 258 to 327 (ESIRWLVLSG…FRIPMLRRMT (70 aa)) lie on the Cytoplasmic side of the membrane. Residues 328-348 (FCLSLAWFATGFAYYSLAMGV) form a helical membrane-spanning segment. Residues 349 to 354 (EEFGVN) are Extracellular-facing. The chain crosses the membrane as a helical span at residues 355 to 375 (LYILQIIFGGVDVPAKFITIL). Topologically, residues 376-386 (SLSYLGRHTTQ) are cytoplasmic. Residues 387–407 (AAALLLAGGAILALTFVPLDL) traverse the membrane as a helical segment. Residues 408 to 471 (QTVRTVLAVF…LVKITGEVQP (64 aa)) lie on the Extracellular side of the membrane. A helical transmembrane segment spans residues 472 to 492 (FIPNIIYGITALLGGSAAFFL). Over 493-542 (PETLNQPLPETIEDLENWSLRAKKPKQEPEVEKASQRIPLQPHGPGLGSS) the chain is Cytoplasmic. Residues 515–542 (KKPKQEPEVEKASQRIPLQPHGPGLGSS) form a disordered region. Residues 517–527 (PKQEPEVEKAS) are compositionally biased toward basic and acidic residues.

Belongs to the major facilitator (TC 2.A.1) superfamily. Organic cation transporter (TC 2.A.1.19) family.

Its subcellular location is the basolateral cell membrane. The enzyme catalyses estrone 3-sulfate(out) + glutarate(in) = estrone 3-sulfate(in) + glutarate(out). It carries out the reaction estrone 3-sulfate(in) + 2-oxoglutarate(out) = estrone 3-sulfate(out) + 2-oxoglutarate(in). It catalyses the reaction glutarate(in) + 2-oxoglutarate(out) = glutarate(out) + 2-oxoglutarate(in). The catalysed reaction is urate(in) + 2-oxoglutarate(out) = urate(out) + 2-oxoglutarate(in). The enzyme catalyses taurocholate(out) + glutarate(in) = taurocholate(in) + glutarate(out). It carries out the reaction dehydroepiandrosterone 3-sulfate(out) + glutarate(in) = dehydroepiandrosterone 3-sulfate(in) + glutarate(out). It catalyses the reaction prostaglandin F2alpha(out) + glutarate(in) = prostaglandin F2alpha(in) + glutarate(out). The catalysed reaction is prostaglandin F2alpha(out) + 2-oxoglutarate(in) = prostaglandin F2alpha(in) + 2-oxoglutarate(out). The enzyme catalyses (R)-carnitine(out) + 2-oxoglutarate(in) = (R)-carnitine(in) + 2-oxoglutarate(out). It carries out the reaction glutarate(in) + (R)-carnitine(out) = glutarate(out) + (R)-carnitine(in). It catalyses the reaction prostaglandin E2(out) + 2-oxoglutarate(in) = prostaglandin E2(in) + 2-oxoglutarate(out). The catalysed reaction is prostaglandin E2(out) + glutarate(in) = prostaglandin E2(in) + glutarate(out). The enzyme catalyses urate(in) + glutarate(out) = urate(out) + glutarate(in). It carries out the reaction taurocholate(out) + 2-oxoglutarate(in) = taurocholate(in) + 2-oxoglutarate(out). It catalyses the reaction dehydroepiandrosterone 3-sulfate(out) + 2-oxoglutarate(in) = dehydroepiandrosterone 3-sulfate(in) + 2-oxoglutarate(out). The catalysed reaction is kynurenate(out) + a dicarboxylate(in) = kynurenate(in) + a dicarboxylate(out). The enzyme catalyses (indol-3-yl)acetate(out) + a dicarboxylate(in) = (indol-3-yl)acetate(in) + a dicarboxylate(out). It carries out the reaction indoxyl sulfate(out) + a dicarboxylate(in) = indoxyl sulfate(in) + a dicarboxylate(out). It catalyses the reaction N-benzoylglycine(out) + a dicarboxylate(in) = N-benzoylglycine(in) + a dicarboxylate(out). The catalysed reaction is 3-carboxy-4-methyl-5-propyl-2-furanpropanoate(out) + a dicarboxylate(in) = 3-carboxy-4-methyl-5-propyl-2-furanpropanoate(in) + a dicarboxylate(out). The enzyme catalyses (6R)-L-erythro-5,6,7,8-tetrahydrobiopterin(out) + a dicarboxylate(in) = (6R)-L-erythro-5,6,7,8-tetrahydrobiopterin(in) + a dicarboxylate(out). It carries out the reaction L-erythro-7,8-dihydrobiopterin(out) + a dicarboxylate(in) = L-erythro-7,8-dihydrobiopterin(in) + a dicarboxylate(out). It catalyses the reaction L-sepiapterin(out) + a dicarboxylate(in) = L-sepiapterin(in) + a dicarboxylate(out). Functions as an organic anion/dicarboxylate exchanger that couples organic anion uptake indirectly to the sodium gradient. Transports organic anions such as estrone 3-sulfate (E1S) and urate in exchange for dicarboxylates such as glutarate or ketoglutarate (2-oxoglutarate). Plays an important role in the excretion of endogenous and exogenous organic anions, especially from the kidney and the brain. E1S transport is pH- and chloride-dependent and may also involve E1S/cGMP exchange. Responsible for the transport of prostaglandin E2 (PGE2) and prostaglandin F2(alpha) (PGF2(alpha)) in the basolateral side of the renal tubule. Involved in the transport of neuroactive tryptophan metabolites kynurenate and xanthurenate. Functions as a biopterin transporters involved in the uptake and the secretion of coenzymes tetrahydrobiopterin (BH4), dihydrobiopterin (BH2) and sepiapterin to urine, thereby determining baseline levels of blood biopterins. May be involved in the basolateral transport of steviol, a metabolite of the popular sugar substitute stevioside. May participate in the detoxification/ renal excretion of drugs and xenobiotics, such as the histamine H(2)-receptor antagonists fexofenadine and cimetidine, the antibiotic benzylpenicillin (PCG), the anionic herbicide 2,4-dichloro-phenoxyacetate (2,4-D), the diagnostic agent p-aminohippurate (PAH), the antiviral acyclovir (ACV), and the mycotoxin ochratoxin (OTA), by transporting these exogenous organic anions across the cell membrane in exchange for dicarboxylates such as 2-oxoglutarate. Contributes to the renal uptake of potent uremic toxins (indoxyl sulfate (IS), indole acetate (IA), hippurate/N-benzoylglycine (HA) and 3-carboxy-4-methyl-5-propyl-2-furanpropionate (CMPF)), pravastatin, PCG, E1S and dehydroepiandrosterone sulfate (DHEAS), and is partly involved in the renal uptake of temocaprilat (an angiotensin-converting enzyme (ACE) inhibitor). May contribute to the release of cortisol in the adrenals. Involved in one of the detoxification systems on the choroid plexus (CP), removes substrates such as E1S or taurocholate (TC), PCG, 2,4-D and PAH, from the cerebrospinal fluid (CSF) to the blood for eventual excretion in urine and bile. Also contributes to the uptake of several other organic compounds such as the prostanoids prostaglandin E(2) and prostaglandin F(2-alpha), L-carnitine, and the therapeutic drugs allopurinol, 6-mercaptopurine (6-MP) and 5-fluorouracil (5-FU). Mediates the transport of PAH, PCG, and the statins pravastatin and pitavastatin, from the cerebrum into the blood circulation across the blood-brain barrier (BBB). In summary, plays a role in the efflux of drugs and xenobiotics, helping reduce their undesired toxicological effects on the body. This is Organic anion transporter 3 (SLC22A8) from Pongo abelii (Sumatran orangutan).